The following is a 678-amino-acid chain: Inositol-trisphosphate 3-kinase C (678 aa).

Disordered stretches follow at residues 26-128 and 151-300; these read LEAL…RRNS and DLQS…LDLS. Positions 44 to 58 are enriched in gly residues; the sequence is PGAGGPTGRPEGGGP. Basic and acidic residues-rich tracts occupy residues 61–76 and 107–116; these read WIEESSLHSEAERTDL and EKPRQNKELD. Ser160 carries the phosphoserine modification. Basic and acidic residues-rich tracts occupy residues 173–196 and 220–236; these read ELDRSDMWQTLPERDNKPRVDNLR and SGKELSADASRTPHDTD. The Nuclear export signal signature appears at 318–326; sequence LCPVPRLII. The segment at 328 to 380 is disordered; it reads PETPEPEAQPVGPQSRIEGGTGGFSSASSFDESEDDLVAGGGGTSDPEDRAGS. At Thr330 the chain carries Phosphothreonine. Ser398 is modified (phosphoserine). Residues Lys426, 466 to 468, and Asp479 each bind ATP; that span reads EDL. Substrate-binding positions include Lys481, 502-508, and 529-536; these read RKDMYEK and KPRYMQWR. A calmodulin-binding region spans residues 504 to 512; the sequence is DMYEKMVAV. 2 residues coordinate ATP: Lys553 and Asp633. Residue Lys636 participates in substrate binding.

The protein belongs to the inositol phosphokinase (IPK) family.

It is found in the nucleus. Its subcellular location is the cytoplasm. It catalyses the reaction 1D-myo-inositol 1,4,5-trisphosphate + ATP = 1D-myo-inositol 1,3,4,5-tetrakisphosphate + ADP + H(+). Activated by calcium/calmodulin. Inhibited by high concentrations of the substrate Ins(1,2,4)P3, and allosterically activated by the product Ins(1,3,4,5)P4. Catalyzes the phosphorylation of 1D-myo-inositol 1,4,5-trisphosphate (InsP3) into 1D-myo-inositol 1,3,4,5-tetrakisphosphate and participates to the regulation of calcium homeostasis. Can phosphorylate inositol 2,4,5-triphosphate to inositol 2,4,5,6-tetraphosphate. The chain is Inositol-trisphosphate 3-kinase C (Itpkc) from Mus musculus (Mouse).